Reading from the N-terminus, the 193-residue chain is Protein hunchback (193 aa).

Positions 18-31 (HLHHHHAHHSHHRH) are enriched in basic residues. Disordered regions lie at residues 18–57 (HLHH…SNTN) and 153–193 (LTPP…KYMA). Positions 34–44 (NSNSNASSPHQ) are enriched in low complexity. The segment covering 174–193 (EPEKEHDLMSNSSEDMKYMA) has biased composition (basic and acidic residues).

This sequence belongs to the hunchback C2H2-type zinc-finger protein family.

The protein resides in the nucleus. In terms of biological role, gap class segmentation protein that controls development of head structures. The chain is Protein hunchback (hb) from Drosophila petalopeza (Fruit fly).